A 510-amino-acid chain; its full sequence is Allene oxide synthase 2, chloroplastic (510 aa).

A chloroplast-targeting transit peptide spans 1–31 (MALTLSFSLPLPSLHQKIPSKYSTFRPIIVS). Lys-127, His-158, and Lys-162 together coordinate heme b. Residues Asn-315 and Lys-321 each coordinate (13S)-hydroperoxy-(9Z,11E)-octadecadienoate. Asn-315 is a (13S)-hydroperoxy-(9Z,11E,15Z)-octadecatrienoate binding site. Residues Lys-463 and Cys-465 each coordinate heme b.

This sequence belongs to the cytochrome P450 family. The cofactor is heme b. Expressed in flower buds, leaves, roots, stems, petioles and cotyledons. Not detected in ripe fruits. Expressed in sieve elements.

The protein resides in the plastid. It is found in the chloroplast inner membrane. The catalysed reaction is (13S)-hydroperoxy-(9Z,11E,15Z)-octadecatrienoate = (9Z,13S,15Z)-12,13-epoxyoctadeca-9,11,15-trienoate + H2O. It carries out the reaction (13S)-hydroperoxy-(9Z,11E)-octadecadienoate = (9Z,13S)-12,13-epoxyoctadeca-9,11-dienoate + H2O. Its function is as follows. Cytochrome P450 of the CYP74A subfamily involved in the biosynthesis of jasmonic acid from lipoxygenase-derived hydroperoxides of free fatty acids. Catalyzes the synthesis of unstable allene oxide, which is further converted spontaneously by hydrolysis or cyclization. Metabolizes 13- but not 9-hydroperoxides of linoleic and linolenic acids. Can use 15S-hydroperoxy-11(Z),13(E),17(Z)-eicosatrienoic acid (15-HPET) and 13S-hydroperoxy-9(Z),11(E),15(Z)-octadecatrienoic acid (13-HPOT) as substrates, but only 50% activity with 13S-hydroperoxy-9(Z),11(E)-octadecadienoic acid (13-HPOD). This is Allene oxide synthase 2, chloroplastic from Solanum lycopersicum (Tomato).